The sequence spans 393 residues: Lipid-A-disaccharide synthase (393 aa).

The protein belongs to the LpxB family.

It carries out the reaction a lipid X + a UDP-2-N,3-O-bis[(3R)-3-hydroxyacyl]-alpha-D-glucosamine = a lipid A disaccharide + UDP + H(+). It functions in the pathway bacterial outer membrane biogenesis; LPS lipid A biosynthesis. In terms of biological role, condensation of UDP-2,3-diacylglucosamine and 2,3-diacylglucosamine-1-phosphate to form lipid A disaccharide, a precursor of lipid A, a phosphorylated glycolipid that anchors the lipopolysaccharide to the outer membrane of the cell. The chain is Lipid-A-disaccharide synthase from Rhodopseudomonas palustris (strain ATCC BAA-98 / CGA009).